A 160-amino-acid chain; its full sequence is SsrA-binding protein (160 aa).

The disordered stretch occupies residues 131–160; that stretch reads KKEFDKRHTEKERDSDREIQRAMRTKGKDD.

The protein belongs to the SmpB family.

It localises to the cytoplasm. In terms of biological role, required for rescue of stalled ribosomes mediated by trans-translation. Binds to transfer-messenger RNA (tmRNA), required for stable association of tmRNA with ribosomes. tmRNA and SmpB together mimic tRNA shape, replacing the anticodon stem-loop with SmpB. tmRNA is encoded by the ssrA gene; the 2 termini fold to resemble tRNA(Ala) and it encodes a 'tag peptide', a short internal open reading frame. During trans-translation Ala-aminoacylated tmRNA acts like a tRNA, entering the A-site of stalled ribosomes, displacing the stalled mRNA. The ribosome then switches to translate the ORF on the tmRNA; the nascent peptide is terminated with the 'tag peptide' encoded by the tmRNA and targeted for degradation. The ribosome is freed to recommence translation, which seems to be the essential function of trans-translation. The polypeptide is SsrA-binding protein (Stutzerimonas stutzeri (strain A1501) (Pseudomonas stutzeri)).